The chain runs to 349 residues: MDAMKPLLGKLATGASLTQAEATRAFDLIFEGAATPAQLGAFLMALRVRGETIDEIVGAVAAMRARMLRVDAPADAMDIVGTGGDGHSTYNVSTLAALIVSACGVPVAKHGNRAASSQSGASDVLSALGVKIGLDSREVEACLEAAGVAFMSAQAHHAAMRHVAAARAELGTRTIFNILGPLANPAGVKFQLLGVYAKSWLEPLAQALRALGSTRVWLVHGADGLDEATTTGPTHVVALENGAIRAFDITPEDAGLQRAALADLKGGSPAFNAAALKAVLEGRKSPYRDIAILNAAAALIVAGRAADLREGARLAAAAIDDGRAASTLSKLVEASNRASLPAVAAGSCP.

Residues glycine 81, 84–85 (GD), threonine 89, 91–94 (NVST), 109–117 (KHGNRAASS), and alanine 121 each bind 5-phospho-alpha-D-ribose 1-diphosphate. Glycine 81 is an anthranilate binding site. Serine 93 contacts Mg(2+). Asparagine 112 serves as a coordination point for anthranilate. Position 167 (arginine 167) interacts with anthranilate. Mg(2+)-binding residues include aspartate 226 and glutamate 227.

The protein belongs to the anthranilate phosphoribosyltransferase family. In terms of assembly, homodimer. It depends on Mg(2+) as a cofactor.

It carries out the reaction N-(5-phospho-beta-D-ribosyl)anthranilate + diphosphate = 5-phospho-alpha-D-ribose 1-diphosphate + anthranilate. It functions in the pathway amino-acid biosynthesis; L-tryptophan biosynthesis; L-tryptophan from chorismate: step 2/5. Functionally, catalyzes the transfer of the phosphoribosyl group of 5-phosphorylribose-1-pyrophosphate (PRPP) to anthranilate to yield N-(5'-phosphoribosyl)-anthranilate (PRA). In Methylocella silvestris (strain DSM 15510 / CIP 108128 / LMG 27833 / NCIMB 13906 / BL2), this protein is Anthranilate phosphoribosyltransferase.